The sequence spans 166 residues: Small ribosomal subunit protein uS5 (166 aa).

The S5 DRBM domain maps to 12-75; that stretch reads YIEKLVQVNR…EAARRNMIQV (64 aa).

Belongs to the universal ribosomal protein uS5 family. In terms of assembly, part of the 30S ribosomal subunit. Contacts proteins S4 and S8.

Its function is as follows. With S4 and S12 plays an important role in translational accuracy. Functionally, located at the back of the 30S subunit body where it stabilizes the conformation of the head with respect to the body. The chain is Small ribosomal subunit protein uS5 from Pseudomonas syringae pv. tomato (strain ATCC BAA-871 / DC3000).